We begin with the raw amino-acid sequence, 502 residues long: Glycerol kinase (502 aa).

Thr-14 is an ADP binding site. Residues Thr-14, Thr-15, and Ser-16 each coordinate ATP. Thr-14 is a binding site for sn-glycerol 3-phosphate. Arg-18 is a binding site for ADP. Positions 84, 85, 136, and 246 each coordinate sn-glycerol 3-phosphate. Residues Arg-84, Glu-85, Tyr-136, Asp-246, and Gln-247 each coordinate glycerol. ADP is bound by residues Thr-268 and Gly-311. Thr-268, Gly-311, Gln-315, and Gly-412 together coordinate ATP. Residues Gly-412 and Asn-416 each contribute to the ADP site.

Belongs to the FGGY kinase family. As to quaternary structure, homotetramer and homodimer (in equilibrium). Heterodimer with EIIA-Glc. Binds 1 zinc ion per glycerol kinase EIIA-Glc dimer. The zinc ion is important for dimerization.

It carries out the reaction glycerol + ATP = sn-glycerol 3-phosphate + ADP + H(+). The protein operates within polyol metabolism; glycerol degradation via glycerol kinase pathway; sn-glycerol 3-phosphate from glycerol: step 1/1. With respect to regulation, activity of this regulatory enzyme is affected by several metabolites. Allosterically and non-competitively inhibited by fructose 1,6-bisphosphate (FBP) and unphosphorylated phosphocarrier protein EIIA-Glc (III-Glc), an integral component of the bacterial phosphotransferase (PTS) system. Functionally, key enzyme in the regulation of glycerol uptake and metabolism. Catalyzes the phosphorylation of glycerol to yield sn-glycerol 3-phosphate. The sequence is that of Glycerol kinase from Escherichia coli (strain ATCC 8739 / DSM 1576 / NBRC 3972 / NCIMB 8545 / WDCM 00012 / Crooks).